A 1372-amino-acid chain; its full sequence is DNA-directed RNA polymerase subunit beta (1372 aa).

The protein belongs to the RNA polymerase beta chain family. As to quaternary structure, the RNAP catalytic core consists of 2 alpha, 1 beta, 1 beta' and 1 omega subunit. When a sigma factor is associated with the core the holoenzyme is formed, which can initiate transcription.

It catalyses the reaction RNA(n) + a ribonucleoside 5'-triphosphate = RNA(n+1) + diphosphate. Its function is as follows. DNA-dependent RNA polymerase catalyzes the transcription of DNA into RNA using the four ribonucleoside triphosphates as substrates. The chain is DNA-directed RNA polymerase subunit beta from Nitratidesulfovibrio vulgaris (strain DSM 19637 / Miyazaki F) (Desulfovibrio vulgaris).